A 374-amino-acid polypeptide reads, in one-letter code: Probable quinol oxidase subunit 2 (374 aa).

The N-terminal stretch at 1–19 is a signal peptide; the sequence is MSKFKSLLLMFGTLILLSG. C20 is lipidated: N-palmitoyl cysteine. A lipid anchor (S-diacylglycerol cysteine) is attached at C20. A run of 2 helical transmembrane segments spans residues 43–63 and 82–102; these read SIIF…IFIF and IETI…IPTV. A disordered region spans residues 321–374; it reads MKPMILGNNDPYDNEFKKEEDHNSKEMEKISKSAKDENASKFGSKADNDHGGGH. Residues 334–374 are compositionally biased toward basic and acidic residues; sequence NEFKKEEDHNSKEMEKISKSAKDENASKFGSKADNDHGGGH.

Belongs to the cytochrome c oxidase subunit 2 family.

The protein localises to the cell membrane. It catalyses the reaction 2 a quinol + O2 = 2 a quinone + 2 H2O. Catalyzes quinol oxidation with the concomitant reduction of oxygen to water. Subunit II transfers the electrons from a quinol to the binuclear center of the catalytic subunit I. The polypeptide is Probable quinol oxidase subunit 2 (qoxA) (Staphylococcus haemolyticus (strain JCSC1435)).